A 268-amino-acid chain; its full sequence is Tryptophan synthase alpha chain (268 aa).

Active-site proton acceptor residues include glutamate 49 and aspartate 60.

Belongs to the TrpA family. In terms of assembly, tetramer of two alpha and two beta chains.

It catalyses the reaction (1S,2R)-1-C-(indol-3-yl)glycerol 3-phosphate + L-serine = D-glyceraldehyde 3-phosphate + L-tryptophan + H2O. It participates in amino-acid biosynthesis; L-tryptophan biosynthesis; L-tryptophan from chorismate: step 5/5. In terms of biological role, the alpha subunit is responsible for the aldol cleavage of indoleglycerol phosphate to indole and glyceraldehyde 3-phosphate. This chain is Tryptophan synthase alpha chain, found in Xylella fastidiosa (strain M23).